The following is a 336-amino-acid chain: Anthranilate phosphoribosyltransferase (336 aa).

Residues Gly78, 81-82, Thr86, 88-91, 106-114, and Ser118 contribute to the 5-phospho-alpha-D-ribose 1-diphosphate site; these read GD, NVST, and KHGNYSVSS. An anthranilate-binding site is contributed by Gly78. A Mg(2+)-binding site is contributed by Ser90. Asn109 contributes to the anthranilate binding site. An anthranilate-binding site is contributed by Arg164. Residues Asp222 and Glu223 each coordinate Mg(2+).

This sequence belongs to the anthranilate phosphoribosyltransferase family. As to quaternary structure, homodimer. The cofactor is Mg(2+).

It carries out the reaction N-(5-phospho-beta-D-ribosyl)anthranilate + diphosphate = 5-phospho-alpha-D-ribose 1-diphosphate + anthranilate. The protein operates within amino-acid biosynthesis; L-tryptophan biosynthesis; L-tryptophan from chorismate: step 2/5. Catalyzes the transfer of the phosphoribosyl group of 5-phosphorylribose-1-pyrophosphate (PRPP) to anthranilate to yield N-(5'-phosphoribosyl)-anthranilate (PRA). This chain is Anthranilate phosphoribosyltransferase, found in Halobacterium salinarum (strain ATCC 29341 / DSM 671 / R1).